The primary structure comprises 160 residues: NADH-quinone oxidoreductase subunit B (160 aa).

C37, C38, C102, and C132 together coordinate [4Fe-4S] cluster.

It belongs to the complex I 20 kDa subunit family. In terms of assembly, NDH-1 is composed of 14 different subunits. Subunits NuoB, C, D, E, F, and G constitute the peripheral sector of the complex. It depends on [4Fe-4S] cluster as a cofactor.

It localises to the cell inner membrane. It carries out the reaction a quinone + NADH + 5 H(+)(in) = a quinol + NAD(+) + 4 H(+)(out). Its function is as follows. NDH-1 shuttles electrons from NADH, via FMN and iron-sulfur (Fe-S) centers, to quinones in the respiratory chain. Couples the redox reaction to proton translocation (for every two electrons transferred, four hydrogen ions are translocated across the cytoplasmic membrane), and thus conserves the redox energy in a proton gradient. In Neisseria gonorrhoeae (strain NCCP11945), this protein is NADH-quinone oxidoreductase subunit B.